The sequence spans 258 residues: D-beta-hydroxybutyrate dehydrogenase (258 aa).

6–30 is an NAD(+) binding site; the sequence is VITGSTSGIGLAIARTLAKAGANIV. Serine 140 lines the substrate pocket. Tyrosine 153 (proton acceptor) is an active-site residue.

Belongs to the short-chain dehydrogenases/reductases (SDR) family.

It catalyses the reaction (R)-3-hydroxybutanoate + NAD(+) = acetoacetate + NADH + H(+). The protein is D-beta-hydroxybutyrate dehydrogenase (bdhA) of Rhizobium meliloti (strain 1021) (Ensifer meliloti).